The following is a 261-amino-acid chain: Cytochrome c oxidase subunit 3 (261 aa).

Over 1-15 the chain is Mitochondrial matrix; sequence MTHQTHAYHMVNPSP. The helical transmembrane segment at 16-34 threads the bilayer; it reads WPLTGALSALLMTSGLTMW. Over 35-40 the chain is Mitochondrial intermembrane; the sequence is FHFNSM. Residues 41–66 traverse the membrane as a helical segment; the sequence is TLLMIGLTTNMLTMYQWWRDVIREST. Over 67–72 the chain is Mitochondrial matrix; it reads FQGHHT. Residues 73–105 form a helical membrane-spanning segment; it reads PAVQKGLRYGMILFIISEVLFFTGFFWAFYHSS. At 106 to 128 the chain is on the mitochondrial intermembrane side; sequence LAPTPELGGCWPPTGIHPLNPLE. A helical transmembrane segment spans residues 129–152; that stretch reads VPLLNTSVLLASGVSITWAHHSLM. The Mitochondrial matrix segment spans residues 153-155; sequence EGD. The chain crosses the membrane as a helical span at residues 156–183; sequence RKHMLQALFITITLGVYFTLLQASEYYE. Topologically, residues 184-190 are mitochondrial intermembrane; it reads APFTISD. Residues 191–223 form a helical membrane-spanning segment; the sequence is GVYGSTFFVATGFHGLHVIIGSTFLIVCFFRQL. The Mitochondrial matrix portion of the chain corresponds to 224-232; the sequence is KFHFTSNHH. Residues 233–256 traverse the membrane as a helical segment; that stretch reads FGFEAAAWYWHFVDVVWLFLYVSI. Topologically, residues 257 to 261 are mitochondrial intermembrane; the sequence is YWWGS.

This sequence belongs to the cytochrome c oxidase subunit 3 family. In terms of assembly, component of the cytochrome c oxidase (complex IV, CIV), a multisubunit enzyme composed of 14 subunits. The complex is composed of a catalytic core of 3 subunits MT-CO1, MT-CO2 and MT-CO3, encoded in the mitochondrial DNA, and 11 supernumerary subunits COX4I1 (or COX4I2), COX5A, COX5B, COX6A2 (or COX6A1), COX6B1 (or COX6B2), COX6C, COX7A1 (or COX7A2), COX7B, COX7C, COX8B and NDUFA4, which are encoded in the nuclear genome. The complex exists as a monomer or a dimer and forms supercomplexes (SCs) in the inner mitochondrial membrane with NADH-ubiquinone oxidoreductase (complex I, CI) and ubiquinol-cytochrome c oxidoreductase (cytochrome b-c1 complex, complex III, CIII), resulting in different assemblies (supercomplex SCI(1)III(2)IV(1) and megacomplex MCI(2)III(2)IV(2)).

It is found in the mitochondrion inner membrane. It catalyses the reaction 4 Fe(II)-[cytochrome c] + O2 + 8 H(+)(in) = 4 Fe(III)-[cytochrome c] + 2 H2O + 4 H(+)(out). Its function is as follows. Component of the cytochrome c oxidase, the last enzyme in the mitochondrial electron transport chain which drives oxidative phosphorylation. The respiratory chain contains 3 multisubunit complexes succinate dehydrogenase (complex II, CII), ubiquinol-cytochrome c oxidoreductase (cytochrome b-c1 complex, complex III, CIII) and cytochrome c oxidase (complex IV, CIV), that cooperate to transfer electrons derived from NADH and succinate to molecular oxygen, creating an electrochemical gradient over the inner membrane that drives transmembrane transport and the ATP synthase. Cytochrome c oxidase is the component of the respiratory chain that catalyzes the reduction of oxygen to water. Electrons originating from reduced cytochrome c in the intermembrane space (IMS) are transferred via the dinuclear copper A center (CU(A)) of subunit 2 and heme A of subunit 1 to the active site in subunit 1, a binuclear center (BNC) formed by heme A3 and copper B (CU(B)). The BNC reduces molecular oxygen to 2 water molecules using 4 electrons from cytochrome c in the IMS and 4 protons from the mitochondrial matrix. The polypeptide is Cytochrome c oxidase subunit 3 (MT-CO3) (Bos taurus (Bovine)).